The sequence spans 68 residues: QWIPGQSCTNADCGEGQCCTGGSYNRHCQSLSDDGKPCQRPNKYDEYKFGCPCKEGLMCQVINYCQKK.

At Q1 the chain carries Pyrrolidone carboxylic acid. Intrachain disulfides connect C8-C19, C13-C28, C18-C51, C38-C59, and C53-C65.

As to expression, expressed by the venom gland.

It is found in the secreted. Functionally, non-toxic to mice and insects. In Phoneutria nigriventer (Brazilian armed spider), this protein is U19-ctenitoxin-Pn1a.